The primary structure comprises 338 residues: MNRIDVHHHFIPPAYVKAFNSTPGDPSGWHLPKWTPESTLSLMASHSTRTAILSLTAPGTSIMSNSPVESANLARQINLYGFQLHQENPTRFGFFASLPHLTPETIPSAVEELAYALDTLQADGITLYTRYSGTGYLGHAAFAPLWEELNRRKAVVFIHPTNTASDAQNKPEMVNPKLPQPIIDYPHETCRTAVDLITSGTISKNPDVKIILSHGGGTLPILATRAANLLYDAGLTEITPETFLEQARSFYLDLALSGNVGNLELLVGKNGFAKPGHVLYGSDFPYAPVETINKYVGMMEEFFAQGGDKEEVARGAAAELFPRFRIEDNKEMIPQNRL.

Zn(2+)-binding residues include H7, H9, H159, and D283.

The protein belongs to the metallo-dependent hydrolases superfamily. ACMSD family.

It catalyses the reaction 6-methylsalicylate + H(+) = 3-methylphenol + CO2. Its pathway is secondary metabolite biosynthesis; terpenoid biosynthesis. In terms of biological role, decarboxylase; part of the gene cluster that mediates the biosynthesis of macrophorins, isoprenoid epoxycyclohexenones containing cyclized drimane moieties. The first step of the pathway is the synthesis of 6-methylsalicylic acid (6-MSA) by the polyketide synthase macA. 6-MSA is then converted to m-cresol by the decarboxylase macB. The cytochrome P450 monooxygenase macC then catalyzes the oxidation of m-cresol to toluquinol. Epoxidation of toluquinol is then performed by the short chain dehydrogenase macD, with the help of macE, and a further prenylation by macG leads to 7-deacetoxyyanuthone A. The next step is the hydroxylation of C-22 of 7-deacetoxyyanuthone A by the cytochrome P450 monooxygenase macH to yield 22-deacetylyanuthone A. O-Mevalon transferase macI then attaches mevalon to the hydroxyl group of 22-deacetylyanuthone A to produce yanuthone E. The terpene cyclase macJ catalyzes the cyclization of 22-deacetylyanuthone A to macrophorin A. MacJ is also able to catalyze cyclization of yanuthone E and 7-deacetoxyyanuthone A to their corresponding macrophorins. The macJ products can be further modified by macH and macJ, as well as by the FAD-dependent monooxygenase macF, to produce additional macrophorins, including 4'-oxomacrophorin A, 4'-oxomacrophorin D and 4'-oxomacrophorin E. The polypeptide is Decarboxylase macB (Penicillium terrestre).